The chain runs to 104 residues: MNETEFHQLVDSQLERIEAAIDEAGADIDYETSGNVMTLEFDDGSQIIINRQEPMREIWLASKSGGYHFKSIDGEWICSKTGLELLTLLKQECDKHADEPIDWV.

The protein belongs to the frataxin family.

Functionally, involved in iron-sulfur (Fe-S) cluster assembly. May act as a regulator of Fe-S biogenesis. This is Iron-sulfur cluster assembly protein CyaY from Vibrio cholerae serotype O1 (strain ATCC 39541 / Classical Ogawa 395 / O395).